We begin with the raw amino-acid sequence, 142 residues long: Hemoglobin subunit pi (142 aa).

The 141-residue stretch at 2–142 (TLTQAEKAAV…VSSVLTEKYR (141 aa)) folds into the Globin domain. Heme b-binding residues include His-59 and His-88.

Belongs to the globin family.

The pi' chain is the counterpart of the alpha chain in the major early embryonic hemoglobin P. This is Hemoglobin subunit pi from Cairina moschata (Muscovy duck).